Reading from the N-terminus, the 1135-residue chain is DNA-directed RNA polymerase subunit beta' (1135 aa).

Cys-60, Cys-62, Cys-75, and Cys-78 together coordinate Zn(2+). Mg(2+)-binding residues include Asp-450, Asp-452, and Asp-454. Zn(2+)-binding residues include Cys-795, Cys-869, Cys-876, and Cys-879.

Belongs to the RNA polymerase beta' chain family. The RNAP catalytic core consists of 2 alpha, 1 beta, 1 beta' and 1 omega subunit. When a sigma factor is associated with the core the holoenzyme is formed, which can initiate transcription. It depends on Mg(2+) as a cofactor. The cofactor is Zn(2+).

It catalyses the reaction RNA(n) + a ribonucleoside 5'-triphosphate = RNA(n+1) + diphosphate. Functionally, DNA-dependent RNA polymerase catalyzes the transcription of DNA into RNA using the four ribonucleoside triphosphates as substrates. The protein is DNA-directed RNA polymerase subunit beta' of Clostridium tetani (strain Massachusetts / E88).